A 1091-amino-acid chain; its full sequence is Leucine--tRNA ligase, cytoplasmic (1091 aa).

The short motif at Pro-53 to His-63 is the 'HIGH' region element. The 'KMSKS' region signature appears at Lys-715–Ser-719. Lys-718 lines the ATP pocket.

The protein belongs to the class-I aminoacyl-tRNA synthetase family.

It localises to the cytoplasm. It is found in the cytosol. It carries out the reaction tRNA(Leu) + L-leucine + ATP = L-leucyl-tRNA(Leu) + AMP + diphosphate. In terms of biological role, catalyzes the specific attachment of an amino acid to its cognate tRNA in a two step reaction: the amino acid (AA) is first activated by ATP to form AA-AMP and then transferred to the acceptor end of the tRNA. In Arabidopsis thaliana (Mouse-ear cress), this protein is Leucine--tRNA ligase, cytoplasmic.